The primary structure comprises 269 residues: Protein MGF 110-1L (269 aa).

A signal peptide spans 1-26 (MLGLQIFTLLSIPTLLYTYELELLDL). The A repeat unit spans residues 1–145 (MLGLQIFTLL…YVRKRSLQTV (145 aa)). Residues 27–116 (TRTPPEKELE…HEWHEAVIRK (90 aa)) lie on the Extracellular side of the membrane. N-linked (GlcNAc...) asparagine; by host glycosylation is present at N75. The helical transmembrane segment at 117-137 (WQKLLTYGFYLVGCVLVANYV) threads the bilayer. Residues 138–144 (RKRSLQT) lie on the Cytoplasmic side of the membrane. A helical membrane pass occupies residues 145-165 (VMYLLVLLVIFFLLSQLMLYR). One copy of the B repeat lies at 147–269 (YLLVLLVIFF…DNLMKKQDIM (123 aa)). Over 166 to 269 (ELEDKKHKIG…DNLMKKQDIM (104 aa)) the chain is Extracellular.

This sequence belongs to the asfivirus MGF 110 family.

The protein localises to the host membrane. Functionally, plays a role in virus cell tropism, and may be required for efficient virus replication in macrophages. The chain is Protein MGF 110-1L from African swine fever virus (isolate Warthog/Namibia/Wart80/1980) (ASFV).